The primary structure comprises 222 residues: Guanylate kinase (222 aa).

A Guanylate kinase-like domain is found at 19-197 (GFLFILSSPS…SVSLIKSIYL (179 aa)). ATP is bound at residue 26-33 (SPSGAGKS).

It belongs to the guanylate kinase family.

The protein resides in the cytoplasm. The enzyme catalyses GMP + ATP = GDP + ADP. Its function is as follows. Essential for recycling GMP and indirectly, cGMP. This Bartonella henselae (strain ATCC 49882 / DSM 28221 / CCUG 30454 / Houston 1) (Rochalimaea henselae) protein is Guanylate kinase.